The chain runs to 271 residues: Calretinin (271 aa).

EF-hand domains lie at 16-51, 63-98, 107-142, 151-186, 195-230, and 235-270; these read LTAT…LEKA, NLGE…EENF, GSST…LLKK, KLQE…QENF, LTSE…LYEK, and MNIQ…SEPP. Ca(2+) contacts are provided by Asp29, Asp31, Asn33, Tyr35, Glu40, Asp76, Asn78, Asp80, Lys82, Glu87, Asp120, Asp122, Ser124, Tyr126, Glu131, Asp164, Asn166, Asp168, Lys170, Glu175, Asp208, Asp210, Ser212, Tyr214, and Glu219. At Tyr214 the chain carries Phosphotyrosine.

This sequence belongs to the calbindin family.

The protein localises to the synapse. The protein resides in the cell projection. Its subcellular location is the dendrite. Calcium-binding protein involved in calcium homeostasis and signal transduction. It plays a critical role in buffering intracellular calcium levels and modulating calcium-dependent signaling pathways. Predominantly expressed in specific neuronal populations, influences synaptic plasticity and neuronal excitability, contributing to learning and memory. During embryonic development, it facilitates neuronal differentiation and maturation. The sequence is that of Calretinin (CALB2) from Bos taurus (Bovine).